Consider the following 304-residue polypeptide: Acetylglutamate kinase (304 aa).

Substrate contacts are provided by residues 74–75 (GG), arginine 96, and asparagine 201.

This sequence belongs to the acetylglutamate kinase family. ArgB subfamily.

The protein localises to the cytoplasm. The enzyme catalyses N-acetyl-L-glutamate + ATP = N-acetyl-L-glutamyl 5-phosphate + ADP. It participates in amino-acid biosynthesis; L-arginine biosynthesis; N(2)-acetyl-L-ornithine from L-glutamate: step 2/4. In terms of biological role, catalyzes the ATP-dependent phosphorylation of N-acetyl-L-glutamate. The chain is Acetylglutamate kinase from Alkalilimnicola ehrlichii (strain ATCC BAA-1101 / DSM 17681 / MLHE-1).